The chain runs to 256 residues: Cell division protein DivIB (256 aa).

Over 1–23 (MSKDLISTDEYIKIKKKRKRIKK) the chain is Cytoplasmic. The chain crosses the membrane as a helical span at residues 24–44 (IVVLFIFLISILVTLCLKIPY). The POTRA domain maps to 45–113 (FNIESIEIKG…NKLQIYVKER (69 aa)). Topologically, residues 45–256 (FNIESIEIKG…EGNPVFYIEK (212 aa)) are extracellular.

The protein belongs to the FtsQ/DivIB family. DivIB subfamily.

The protein resides in the cell membrane. Its function is as follows. Cell division protein that may be involved in stabilizing or promoting the assembly of the division complex. The sequence is that of Cell division protein DivIB from Clostridium botulinum (strain Hall / ATCC 3502 / NCTC 13319 / Type A).